The sequence spans 179 residues: Peptide deformylase 2 (179 aa).

Positions 104 and 146 each coordinate Fe cation. The active site involves E147. H150 serves as a coordination point for Fe cation.

This sequence belongs to the polypeptide deformylase family. It depends on Fe(2+) as a cofactor.

It catalyses the reaction N-terminal N-formyl-L-methionyl-[peptide] + H2O = N-terminal L-methionyl-[peptide] + formate. Removes the formyl group from the N-terminal Met of newly synthesized proteins. Requires at least a dipeptide for an efficient rate of reaction. N-terminal L-methionine is a prerequisite for activity but the enzyme has broad specificity at other positions. The protein is Peptide deformylase 2 of Streptomyces coelicolor (strain ATCC BAA-471 / A3(2) / M145).